The sequence spans 130 residues: Small ribosomal subunit protein uS8 (130 aa).

The protein belongs to the universal ribosomal protein uS8 family. As to quaternary structure, part of the 30S ribosomal subunit.

Functionally, one of the primary rRNA binding proteins, it binds directly to 16S rRNA central domain where it helps coordinate assembly of the platform of the 30S subunit. This Thermococcus sibiricus (strain DSM 12597 / MM 739) protein is Small ribosomal subunit protein uS8.